Consider the following 467-residue polypeptide: Peroxisome proliferator-activated receptor alpha (467 aa).

The nuclear receptor DNA-binding region spans 99-173 (NIECRICGDK…VGMSHNAIRF (75 aa)). 2 NR C4-type zinc fingers span residues 102–122 (CRICGDKASGYHYGVHACEGC) and 139–161 (CDRSCKIQKKNRNKCQYCRFHKC). One can recognise an NR LBD domain in the interval 239-466 (FVIHDMETLC…PLLQEIYRDM (228 aa)). Residues 304-433 (DQVTLLKYGV…PKLLQKLADL (130 aa)) are required for heterodimerization with RXRA.

This sequence belongs to the nuclear hormone receptor family. NR1 subfamily. In terms of assembly, heterodimer; with RXRA. This heterodimerization is required for DNA binding and transactivation activity. Interacts with NCOA3 coactivator. Interacts with CITED2; the interaction stimulates its transcriptional activity. Also interacts with PPARBP in vitro. Interacts with AKAP13, LPIN1, PRDM16 and coactivator NCOA6. Interacts with ASXL1 and ASXL2. Interacts with PER2. Interacts with SIRT1; the interaction seems to be modulated by NAD(+) levels. Interacts with CRY1 and CRY2. In hepatocytes, interacts with PAQR3 and HUWE1; the interactions promote PPARA poylubiquitination and HUWE1-mediated degradation. In terms of processing, ubiquitinated by E3 ubiquitin-protein ligase HUWE1; leading to proteasomal degradation. Post-translationally, phosphorylated.

The protein resides in the nucleus. Functionally, ligand-activated transcription factor. Key regulator of lipid metabolism. Activated by the endogenous ligand 1-palmitoyl-2-oleoyl-sn-glycerol-3-phosphocholine (16:0/18:1-GPC). Activated by oleylethanolamide, a naturally occurring lipid that regulates satiety. Receptor for peroxisome proliferators such as hypolipidemic drugs and fatty acids. Regulates the peroxisomal beta-oxidation pathway of fatty acids. Functions as a transcription activator for the ACOX1 and P450 genes. Transactivation activity requires heterodimerization with RXRA and is antagonized by NR2C2. May be required for the propagation of clock information to metabolic pathways regulated by PER2. This is Peroxisome proliferator-activated receptor alpha (PPARA) from Cavia porcellus (Guinea pig).